We begin with the raw amino-acid sequence, 676 residues long: Hypermethylated in cancer 1 protein (676 aa).

The segment at 1-27 (APGARPAASRERGHKSREERCGERGAA) is disordered. The segment covering 8–23 (ASRERGHKSREERCGE) has biased composition (basic and acidic residues). In terms of domain architecture, BTB spans 63 to 126 (CDVIIVVQNA…IYTGRLGECE (64 aa)). Positions 241–245 (GLDLS) are binding to CtBP. Disordered regions lie at residues 264–326 (PAEP…LPRG) and 342–405 (GPYL…DRYC). Basic and acidic residues-rich tracts occupy residues 266–278 (EPREPSLPPRHDS) and 351–361 (EKELEREEKAE). Over residues 384–398 (STSEETGSSEGPSPG) the composition is skewed to low complexity. 5 consecutive C2H2-type zinc fingers follow at residues 420–447 (YVCIPCGKGFPSSEQLNAHVEAHNEEEL), 474–501 (YRCSSCDKSYKDPATLRQHEKTHWLTRP), 502–529 (YPCTICGKKFTQRGTMTRHMRSHLGLKP), 530–557 (FACDACGMRFTRQYRLTEHMRIHSGEKP), and 558–585 (YECQVCGGKFAQQRNLISHMKMHAAGPD).

The protein belongs to the krueppel C2H2-type zinc-finger protein family. Hic subfamily. Interacts with CtBP. Isoform 1 is highly expressed in kidney and lung. Expression of isoform 2 is higher in the lens, retina and stomach, and extremely low in heart, muscle, kidney and lung. Isoform 3 is weakly expressed in heart, kidney and lens.

Its subcellular location is the nucleus. Binds specifically to the gamma F-1-binding motif of the gamma F-crystallin promoter. May have a regulatory role in sclerotome specification and/or differentiation. Isoform 2 functions as a transcriptional repressor in lens cells. The sequence is that of Hypermethylated in cancer 1 protein (HIC1) from Gallus gallus (Chicken).